Consider the following 1068-residue polypeptide: Focal adhesion kinase 1 (1068 aa).

Positions Met1 to Met26 are disordered. Positions Leu10–Ser23 are enriched in polar residues. The FERM domain maps to Arg35 to Ser355. A phosphotyrosine mark is found at Tyr403 and Tyr413. Residues Ile435–Leu693 enclose the Protein kinase domain. ATP contacts are provided by residues Ile441 to Gly447, Lys467, and Glu513 to Cys515. Catalysis depends on Asp559, which acts as the Proton acceptor. Tyr589 and Tyr590 each carry phosphotyrosine; by autocatalysis. Basic and acidic residues predominate over residues Gln699–Arg710. 2 disordered regions span residues Gln699–Met750 and Gly869–Asn912. A phosphotyrosine mark is found at Tyr874 and Tyr941.

Belongs to the protein kinase superfamily. Tyr protein kinase family. FAK subfamily. Phosphorylated on tyrosine residues; phosphorylated kinase is first detected during gastrulation, suggesting that tyrosine phosphorylation is developmentally regulated.

It localises to the cell junction. The protein resides in the focal adhesion. Its subcellular location is the cell membrane. It is found in the cytoplasm. The protein localises to the cytoskeleton. It localises to the cilium basal body. The catalysed reaction is L-tyrosyl-[protein] + ATP = O-phospho-L-tyrosyl-[protein] + ADP + H(+). Non-receptor protein-tyrosine kinase implicated in signaling pathways involved in cell motility, proliferation and apoptosis. Activated by tyrosine-phosphorylation in response to either integrin clustering induced by cell adhesion or antibody cross-linking, or via G-protein coupled receptor (GPCR) occupancy by ligands such as bombesin or lysophosphatidic acid, or via LDL receptor occupancy. Microtubule-induced dephosphorylation at Tyr-397 is crucial for the induction of focal adhesion disassembly. The chain is Focal adhesion kinase 1 (ptk2) from Xenopus laevis (African clawed frog).